A 493-amino-acid polypeptide reads, in one-letter code: Catalase A (493 aa).

The disordered stretch occupies residues 1–24; that stretch reads MKRKLTGLFGAPVSDRENSMTAGP. Residues histidine 53 and asparagine 126 contribute to the active site. A heme-binding site is contributed by tyrosine 336.

The protein belongs to the catalase family. In terms of assembly, homodimer. Heme serves as cofactor.

The enzyme catalyses 2 H2O2 = O2 + 2 H2O. In terms of biological role, decomposes hydrogen peroxide into water and oxygen; serves to protect cells from the toxic effects of hydrogen peroxide. The protein is Catalase A (katA) of Staphylococcus xylosus.